The sequence spans 626 residues: MGLLQGLLRVRKLLLVVCVPLLLLPLPVLHPSSEASCAYVLIVTAVYWVSEAVPLGAAALVPAFLYPFFGVLRSNEVAAEYFKNTTLLLVGVICVAAAVEKWNLHKRIALRMVLMAGAKPGMLLLCFMCCTTLLSMWLSNTSTTAMVMPIVEAVLQELVSAEDEQLVAGNSNTEEAEPISLDVKNSQPSLELIFVNEESNADLTTLMHNENLNGVPSITNPIKTANQHQGKKQHPSQEKPQVLTPSPRKQKLNRKYRSHHDQMICKCLSLSISYSATIGGLTTIIGTSTSLIFLEHFNNQYPAAEVVNFGTWFLFSFPISLIMLVVSWFWMHWLFLGCNFKETCSLSKKKKTKREQLSEKRIQEEYEKLGDISYPEMVTGFFFILMTVLWFTREPGFVPGWDSFFEKKGYRTDATVSVFLGFLLFLIPAKKPCFGKKNDGENQEHSLGTEPIITWKDFQKTMPWEIVILVGGGYALASGSKSSGLSTWIGNQMLSLSSLPPWAVTLLACILVSIVTEFVSNPATITIFLPILCSLSETLHINPLYTLIPVTMCISFAVMLPVGNPPNAIVFSYGHCQIKDMVKAGLGVNVIGLVIVMVAINTWGVSLFHLDTYPAWARVSNITDQA.

4 helical membrane passes run 13 to 33 (LLLV…HPSS), 52 to 72 (AVPL…FGVL), 77 to 97 (VAAE…CVAA), and 113 to 133 (VLMA…CTTL). Over residues 217 to 228 (SITNPIKTANQH) the composition is skewed to polar residues. The segment at 217 to 252 (SITNPIKTANQHQGKKQHPSQEKPQVLTPSPRKQKL) is disordered. The next 8 membrane-spanning stretches (helical) occupy residues 274 to 294 (YSAT…LIFL), 309 to 329 (FGTW…VSWF), 372 to 392 (ISYP…LWFT), 414 to 434 (ATVS…KPCF), 466 to 486 (IVIL…SGLS), 499 to 519 (LPPW…TEFV), 543 to 563 (PLYT…LPVG), and 590 to 610 (VIGL…LFHL).

It belongs to the SLC13A/DASS transporter (TC 2.A.47) family. NADC subfamily. In terms of tissue distribution, highly expressed in placenta and testis with intermediate levels in brain and lower levels in heart, thymus and liver.

The protein resides in the membrane. It carries out the reaction sulfate(out) + 3 Na(+)(out) = sulfate(in) + 3 Na(+)(in). Its activity is regulated as follows. Transport is inhibited by thiosulfate, phosphate, molybdate, selenate and tungstate. Not inhibited by oxalate, citrate, succinate, phenol red or 4,4'-diisothiocyanostilbene-2,2'-disulfonic acid (DIDS). Functionally, sodium:sulfate symporter that mediates sulfate reabsorption in the high endothelial venules (HEV). This chain is Solute carrier family 13 member 4 (SLC13A4), found in Homo sapiens (Human).